The following is a 478-amino-acid chain: MSSTAPRTLYQKIWDAHVVERRDDGTCLIYIDRHLVHEVTSPQAFEALRAAGRKVRRPDLTLAVPDHNLPTTARRTADGRRVPIADPESAQQLEALERNAPEFGIRYIGDADDEQGIVHVVGPEQGFSLPGATIVCGDSHTACHGGLGALAFGIGTSEVEHVLATQTLLLKQSKTMEVRVEGELTPGVTAKDVVLHITGVLGAAGGTGSVIEYTGSVIRDLSIEGRLTISNMAIEHGARAGLCAPDEKTFAYLKGRPYAPRGEDWDKAVAWWKSLATDPGATYDKVVVIDAKDIAPSVTWGTSPEDVLPISGLVPAPESFADPSKQEAARASLEYMGLVPGQRMEDVEVQNIFIGSCTNSRIEDMRAAAAILKGRKKADNVKWAIVVPGSGLVKKQAEEEGLDRVFIEAGFEWREPGCSACLGMNPDKVPAGERCASTSNRNFVGRQGPGARTHLVSPAMAAAAAVTGRLTDVRKLMA.

Residues Cys-357, Cys-418, and Cys-421 each coordinate [4Fe-4S] cluster.

It belongs to the aconitase/IPM isomerase family. LeuC type 1 subfamily. As to quaternary structure, heterodimer of LeuC and LeuD. The cofactor is [4Fe-4S] cluster.

The enzyme catalyses (2R,3S)-3-isopropylmalate = (2S)-2-isopropylmalate. Its pathway is amino-acid biosynthesis; L-leucine biosynthesis; L-leucine from 3-methyl-2-oxobutanoate: step 2/4. Functionally, catalyzes the isomerization between 2-isopropylmalate and 3-isopropylmalate, via the formation of 2-isopropylmaleate. This Novosphingobium aromaticivorans (strain ATCC 700278 / DSM 12444 / CCUG 56034 / CIP 105152 / NBRC 16084 / F199) protein is 3-isopropylmalate dehydratase large subunit.